The chain runs to 307 residues: Taste receptor type 2 member 106 (307 aa).

Residues 1–7 lie on the Extracellular side of the membrane; that stretch reads MLTIPEG. The chain crosses the membrane as a helical span at residues 8 to 28; the sequence is ILLCFITSGSVLGVLGNGFIL. Residues 29–41 lie on the Cytoplasmic side of the membrane; the sequence is HVNCTDCVRQKFS. A helical transmembrane segment spans residues 42-62; that stretch reads TTGFIFTGLAISRICVICIII. Over 63–81 the chain is Extracellular; it reads SDGYLKLFSPHMVASDAHI. The helical transmembrane segment at 82–104 threads the bilayer; it reads IGISYLWIITNHTSTCFATILNL. Topologically, residues 105–124 are cytoplasmic; that stretch reads FYFLKIANFSHYIFFCLKRK. Residues 125–145 traverse the membrane as a helical segment; sequence LNTIFIFLLGCLFISWSVAFP. Residues 146–179 are Extracellular-facing; it reads QTVKIFNDKMKHRNTSWKFHLHKSKFIINHILLN. N-linked (GlcNAc...) asparagine glycosylation is present at asparagine 159. The chain crosses the membrane as a helical span at residues 180-200; it reads LGVIFFCMVAIITSFLLIISL. Topologically, residues 201-227 are cytoplasmic; sequence WKHNRKMQLYVSRFKSLNTEVHLKVMK. Residues 228 to 248 form a helical membrane-spanning segment; the sequence is VLISFIILLILHVIGILIETL. The Extracellular segment spans residues 249–257; that stretch reads SFLRYENKL. The chain crosses the membrane as a helical span at residues 258–278; that stretch reads LLILGLNFSSMYPCCHSFILI. Residues 279-307 lie on the Cytoplasmic side of the membrane; the sequence is LANNQLKQASLKALKQFKCHKKDKDVRET.

The protein belongs to the G-protein coupled receptor T2R family.

It is found in the membrane. Its function is as follows. Putative taste receptor which may play a role in the perception of bitterness. In Rattus norvegicus (Rat), this protein is Taste receptor type 2 member 106.